The following is a 329-amino-acid chain: Replication factor C small subunit 1 (329 aa).

44-51 (GPPGTGKT) provides a ligand contact to ATP.

Belongs to the activator 1 small subunits family. RfcS subfamily. Heteromultimer composed of small subunits (RfcS) and large subunits (RfcL).

Functionally, part of the RFC clamp loader complex which loads the PCNA sliding clamp onto DNA. In Pyrobaculum islandicum (strain DSM 4184 / JCM 9189 / GEO3), this protein is Replication factor C small subunit 1.